The following is a 303-amino-acid chain: Probable 5-dehydro-4-deoxyglucarate dehydratase (303 aa).

This sequence belongs to the DapA family.

It carries out the reaction 5-dehydro-4-deoxy-D-glucarate + H(+) = 2,5-dioxopentanoate + CO2 + H2O. It participates in carbohydrate acid metabolism; D-glucarate degradation; 2,5-dioxopentanoate from D-glucarate: step 2/2. This is Probable 5-dehydro-4-deoxyglucarate dehydratase from Acinetobacter baumannii (strain ATCC 17978 / DSM 105126 / CIP 53.77 / LMG 1025 / NCDC KC755 / 5377).